Consider the following 98-residue polypeptide: MKAYDIIVSPMLTEKTNTQRESINVYVFKVNKRANKKEVGAAIKELFNVTPVSCNLLNIKSKAKVVVSRKGYPIGKGKTSSWKKAYVYLKKEDKIDIF.

This sequence belongs to the universal ribosomal protein uL23 family. In terms of assembly, part of the 50S ribosomal subunit. Contacts protein L29, and trigger factor when it is bound to the ribosome.

One of the early assembly proteins it binds 23S rRNA. One of the proteins that surrounds the polypeptide exit tunnel on the outside of the ribosome. Forms the main docking site for trigger factor binding to the ribosome. This Borreliella afzelii (strain PKo) (Borrelia afzelii) protein is Large ribosomal subunit protein uL23.